A 426-amino-acid chain; its full sequence is Glutamate-1-semialdehyde 2,1-aminomutase (426 aa).

K265 is modified (N6-(pyridoxal phosphate)lysine).

The protein belongs to the class-III pyridoxal-phosphate-dependent aminotransferase family. HemL subfamily. In terms of assembly, homodimer. Pyridoxal 5'-phosphate serves as cofactor.

Its subcellular location is the cytoplasm. The enzyme catalyses (S)-4-amino-5-oxopentanoate = 5-aminolevulinate. It participates in porphyrin-containing compound metabolism; protoporphyrin-IX biosynthesis; 5-aminolevulinate from L-glutamyl-tRNA(Glu): step 2/2. The chain is Glutamate-1-semialdehyde 2,1-aminomutase from Hydrogenovibrio crunogenus (strain DSM 25203 / XCL-2) (Thiomicrospira crunogena).